The sequence spans 176 residues: 2-C-methyl-D-erythritol 2,4-cyclodiphosphate synthase (176 aa).

3 residues coordinate a divalent metal cation: D23, H25, and H60. 23–25 (DSH) is a binding site for 4-CDP-2-C-methyl-D-erythritol 2-phosphate. 149–152 (TSGE) serves as a coordination point for 4-CDP-2-C-methyl-D-erythritol 2-phosphate.

It belongs to the IspF family. As to quaternary structure, homotrimer. The cofactor is a divalent metal cation.

It carries out the reaction 4-CDP-2-C-methyl-D-erythritol 2-phosphate = 2-C-methyl-D-erythritol 2,4-cyclic diphosphate + CMP. Its pathway is isoprenoid biosynthesis; isopentenyl diphosphate biosynthesis via DXP pathway; isopentenyl diphosphate from 1-deoxy-D-xylulose 5-phosphate: step 4/6. Its function is as follows. Involved in the biosynthesis of isopentenyl diphosphate (IPP) and dimethylallyl diphosphate (DMAPP), two major building blocks of isoprenoid compounds. Catalyzes the conversion of 4-diphosphocytidyl-2-C-methyl-D-erythritol 2-phosphate (CDP-ME2P) to 2-C-methyl-D-erythritol 2,4-cyclodiphosphate (ME-CPP) with a corresponding release of cytidine 5-monophosphate (CMP). The sequence is that of 2-C-methyl-D-erythritol 2,4-cyclodiphosphate synthase from Chlamydia caviae (strain ATCC VR-813 / DSM 19441 / 03DC25 / GPIC) (Chlamydophila caviae).